A 231-amino-acid polypeptide reads, in one-letter code: GFP-like fluorescent chromoprotein FP506 (231 aa).

The 5-imidazolinone (Asn-Gly) cross-link spans 66-68 (NYG). Tyrosine 67 is modified (2,3-didehydrotyrosine).

This sequence belongs to the GFP family. Contains a chromophore consisting of modified amino acid residues. The chromophore is formed by autocatalytic backbone condensation between Xaa-N and Gly-(N+2), and oxidation of Tyr-(N+1) to didehydrotyrosine. Maturation of the chromophore requires nothing other than molecular oxygen. The precise stereochemistry of the tyrosine has not been determined. In terms of tissue distribution, tentacle and oral disk.

In terms of biological role, pigment protein that is yellow-green in color. The chain is GFP-like fluorescent chromoprotein FP506 from Zoanthus sp. (Green polyp).